We begin with the raw amino-acid sequence, 176 residues long: ATP synthase subunit b, chloroplastic (176 aa).

The helical transmembrane segment at 19–39 (LDLLETNIINIFILIIILIYL) threads the bilayer.

Belongs to the ATPase B chain family. As to quaternary structure, F-type ATPases have 2 components, F(1) - the catalytic core - and F(0) - the membrane proton channel. F(1) has five subunits: alpha(3), beta(3), gamma(1), delta(1), epsilon(1). F(0) has four main subunits: a(1), b(1), b'(1) and c(10-14). The alpha and beta chains form an alternating ring which encloses part of the gamma chain. F(1) is attached to F(0) by a central stalk formed by the gamma and epsilon chains, while a peripheral stalk is formed by the delta, b and b' chains.

It localises to the plastid. Its subcellular location is the chloroplast thylakoid membrane. Its function is as follows. F(1)F(0) ATP synthase produces ATP from ADP in the presence of a proton or sodium gradient. F-type ATPases consist of two structural domains, F(1) containing the extramembraneous catalytic core and F(0) containing the membrane proton channel, linked together by a central stalk and a peripheral stalk. During catalysis, ATP synthesis in the catalytic domain of F(1) is coupled via a rotary mechanism of the central stalk subunits to proton translocation. Functionally, component of the F(0) channel, it forms part of the peripheral stalk, linking F(1) to F(0). The protein is ATP synthase subunit b, chloroplastic of Galdieria sulphuraria (Red alga).